The following is a 95-amino-acid chain: Large ribosomal subunit protein uL23 (95 aa).

It belongs to the universal ribosomal protein uL23 family. In terms of assembly, part of the 50S ribosomal subunit. Contacts protein L29, and trigger factor when it is bound to the ribosome.

One of the early assembly proteins it binds 23S rRNA. One of the proteins that surrounds the polypeptide exit tunnel on the outside of the ribosome. Forms the main docking site for trigger factor binding to the ribosome. The polypeptide is Large ribosomal subunit protein uL23 (Bacillus licheniformis (strain ATCC 14580 / DSM 13 / JCM 2505 / CCUG 7422 / NBRC 12200 / NCIMB 9375 / NCTC 10341 / NRRL NRS-1264 / Gibson 46)).